The chain runs to 193 residues: NADH-quinone oxidoreductase subunit B (193 aa).

[4Fe-4S] cluster-binding residues include cysteine 72, cysteine 73, cysteine 137, and cysteine 167.

The protein belongs to the complex I 20 kDa subunit family. NDH-1 is composed of 14 different subunits. Subunits NuoB, C, D, E, F, and G constitute the peripheral sector of the complex. It depends on [4Fe-4S] cluster as a cofactor.

It is found in the cell inner membrane. The catalysed reaction is a quinone + NADH + 5 H(+)(in) = a quinol + NAD(+) + 4 H(+)(out). Functionally, NDH-1 shuttles electrons from NADH, via FMN and iron-sulfur (Fe-S) centers, to quinones in the respiratory chain. The immediate electron acceptor for the enzyme in this species is believed to be ubiquinone. Couples the redox reaction to proton translocation (for every two electrons transferred, four hydrogen ions are translocated across the cytoplasmic membrane), and thus conserves the redox energy in a proton gradient. This Bartonella bacilliformis (strain ATCC 35685 / KC583 / Herrer 020/F12,63) protein is NADH-quinone oxidoreductase subunit B.